A 657-amino-acid chain; its full sequence is Pentatricopeptide repeat-containing protein At5g44230 (657 aa).

12 PPR repeats span residues 45–79 (KELL…GLDQ), 80–112 (SCYI…VQFR), 113–147 (NPFL…EITP), 148–178 (VSFT…TFRL), 183–213 (FVYV…MPER), 214–244 (DVIS…LPTK), 245–279 (DMVA…GIRA), 280–314 (DEVT…GYSP), 317–347 (HVVI…MNNK), 348–383 (NVFT…EIKP), 384–419 (NTVT…GVQP), and 420–450 (TRDH…MSVE). Residues 455–530 (VWGALLGACR…TPAVSWVVDK (76 aa)) are type E motif. The interval 532 to 562 (GQMHKFFPGNLNHPMSNKIQDKLEELVERLT) is type E(+) motif. The segment at 563 to 657 (VLGYQPDLSS…SGDCSCGDFW (95 aa)) is type DYW motif.

It belongs to the PPR family. PCMP-H subfamily.

This is Pentatricopeptide repeat-containing protein At5g44230 (PCMP-H17) from Arabidopsis thaliana (Mouse-ear cress).